The chain runs to 315 residues: tRNA dimethylallyltransferase (315 aa).

Residue 13-20 (GPTASGKT) participates in ATP binding. A substrate-binding site is contributed by 15 to 20 (TASGKT). Interaction with substrate tRNA regions lie at residues 38–41 (DSAL), 162–166 (QRLSR), 243–248 (RCVGYR), and 276–283 (KRQITWLR).

Belongs to the IPP transferase family. As to quaternary structure, monomer. Requires Mg(2+) as cofactor.

The catalysed reaction is adenosine(37) in tRNA + dimethylallyl diphosphate = N(6)-dimethylallyladenosine(37) in tRNA + diphosphate. In terms of biological role, catalyzes the transfer of a dimethylallyl group onto the adenine at position 37 in tRNAs that read codons beginning with uridine, leading to the formation of N6-(dimethylallyl)adenosine (i(6)A). The chain is tRNA dimethylallyltransferase from Vibrio cholerae serotype O1 (strain ATCC 39541 / Classical Ogawa 395 / O395).